A 446-amino-acid polypeptide reads, in one-letter code: Vacuolar cation/proton exchanger 4 (446 aa).

A compositionally biased stretch (low complexity) spans 1–16 (MSSISTESSSNLSLLE). A disordered region spans residues 1-33 (MSSISTESSSNLSLLENGGGGSDKPTAETSRRV). The Cytoplasmic portion of the chain corresponds to 1–69 (MSSISTESSS…MRRILTNLQE (69 aa)). Residues 70 to 90 (VLLGTKLFILFPAVPLAVVAH) traverse the membrane as a helical segment. The Extracellular portion of the chain corresponds to 91–96 (RYDCPR). A helical transmembrane segment spans residues 97–117 (AWVFALSLLGLTPLAERISFL). The Cytoplasmic segment spans residues 118–128 (TEQIAFHTGPT). The helical transmembrane segment at 129-149 (VGGLMNATCGNATEMIIAILA) threads the bilayer. The segment at 138–173 (GNATEMIIAILAVGQRKMRIVKLSLLGSILSNLLFV) is cation selection. The Extracellular segment spans residues 150 to 162 (VGQRKMRIVKLSL). A helical membrane pass occupies residues 163–183 (LGSILSNLLFVLGTSLFLGGI). Residues 184–196 (SNLRKHQSFDPRQ) lie on the Cytoplasmic side of the membrane. A helical membrane pass occupies residues 197-217 (GDMNSMLLYLALLCQTLPMIM). The Extracellular portion of the chain corresponds to 218 to 238 (RFTMEAEEYDGSDVVVLSRAS). A helical transmembrane segment spans residues 239–259 (SFVMLIAYLAFLIFHLFSSHL). The Cytoplasmic portion of the chain corresponds to 260–285 (SPPPPPLPQREDVHDDDVSDKEEEGA). A helical membrane pass occupies residues 286-306 (VIGMWSAIFWLIIMTLLVALL). At 307–319 (SDYLVSTIQDAAD) the chain is on the extracellular side. A helical membrane pass occupies residues 320-340 (SWGLSVGFIGIILLPIVGNAA). The tract at residues 337 to 372 (GNAAEHAGAVIFAFRNKLDITLGIALGSATQIALFV) is cation selection. Topologically, residues 341-359 (EHAGAVIFAFRNKLDITLG) are cytoplasmic. A helical membrane pass occupies residues 360-380 (IALGSATQIALFVVPVTVLVA). The Extracellular portion of the chain corresponds to 381-388 (WTMGIEMD). The chain crosses the membrane as a helical span at residues 389–409 (LNFNLLETACFALSILVTSLV). At 410–416 (LQDGTSN) the chain is on the cytoplasmic side. Residues 417–437 (YMKGLVLLLCYVVIAACFFVS) traverse the membrane as a helical segment. The Extracellular segment spans residues 438–446 (NSPSSKLLF).

The protein belongs to the Ca(2+):cation antiporter (CaCA) (TC 2.A.19) family. Cation/proton exchanger (CAX) subfamily. As to expression, expressed at low levels in all tissues.

The protein resides in the vacuole membrane. Functionally, vacuolar cation/proton exchanger (CAX). Translocates Ca(2+) and other metal ions into vacuoles using the proton gradient formed by H(+)-ATPase and H(+)-pyrophosphatase. Cation selectivity transport in tobacco root tonoplast vesicles is Cd(2+)&gt;Zn(2+)&gt;&gt;Ca(2+)&gt;&gt;&gt;Mn(2+). This is Vacuolar cation/proton exchanger 4 (CAX4) from Arabidopsis thaliana (Mouse-ear cress).